We begin with the raw amino-acid sequence, 179 residues long: Cytoglobin-2 (179 aa).

The Globin domain maps to 18–167; it reads PLSDAEMEII…VYWHVTGAYT (150 aa). The heme b site is built by histidine 81 and histidine 113.

Belongs to the globin family. Monomeric.

Its subcellular location is the cytoplasm. It localises to the nucleus. It catalyses the reaction Fe(II)-heme b-[protein] + nitric oxide + O2 = Fe(III)-heme b-[protein] + nitrate. It carries out the reaction Fe(III)-heme b-[protein] + nitric oxide + H2O = Fe(II)-heme b-[protein] + nitrite + 2 H(+). The catalysed reaction is 2 superoxide + 2 H(+) = H2O2 + O2. The enzyme catalyses H2O2 + AH2 = A + 2 H2O. Its function is as follows. Probable multifunctional globin with a hexacoordinated heme iron required for the catalysis of various reactions depending on redox condition of the cell as well as oxygen availability. Has a nitric oxide dioxygenase (NOD) activity and is most probably involved in cell-mediated and oxygen-dependent nitric oxide consumption. Under normoxic conditions functions as a nitric oxide dioxygenase (NOD) but under hypoxic conditions the globin may switch its function to that of a nitrite (NO2) reductase (NiR), generating nitric oxide. Could also have peroxidase and superoxide dismutase activities, detoxifying reactive oxygen species and protecting cells against oxidative stress. Also binds dioxygen with low affinity and could function as an oxygen sensor but has probably no function as a respiratory oxygen carrier. The chain is Cytoglobin-2 from Oryzias latipes (Japanese rice fish).